Here is a 139-residue protein sequence, read N- to C-terminus: Small ribosomal subunit protein uS12 (139 aa).

The tract at residues 1-44 is disordered; that stretch reads MPTINQLVRKPRQSKITKSKSPALNKGYNSFKKSLTDVKSPQKR. Residues 9 to 18 show a composition bias toward basic residues; the sequence is RKPRQSKITK. Residues 19 to 39 are compositionally biased toward polar residues; it reads SKSPALNKGYNSFKKSLTDVK. D102 carries the 3-methylthioaspartic acid modification.

It belongs to the universal ribosomal protein uS12 family. In terms of assembly, part of the 30S ribosomal subunit. Contacts proteins S8 and S17. May interact with IF1 in the 30S initiation complex.

In terms of biological role, with S4 and S5 plays an important role in translational accuracy. Interacts with and stabilizes bases of the 16S rRNA that are involved in tRNA selection in the A site and with the mRNA backbone. Located at the interface of the 30S and 50S subunits, it traverses the body of the 30S subunit contacting proteins on the other side and probably holding the rRNA structure together. The combined cluster of proteins S8, S12 and S17 appears to hold together the shoulder and platform of the 30S subunit. This Lysinibacillus sphaericus (strain C3-41) protein is Small ribosomal subunit protein uS12.